We begin with the raw amino-acid sequence, 276 residues long: Glutamate racemase (276 aa).

Residues aspartate 9–serine 10 and tyrosine 41–glycine 42 each bind substrate. Residue cysteine 72 is the Proton donor/acceptor of the active site. A substrate-binding site is contributed by asparagine 73–threonine 74. Residue cysteine 183 is the Proton donor/acceptor of the active site. Position 184-185 (threonine 184–histidine 185) interacts with substrate.

It belongs to the aspartate/glutamate racemases family.

The enzyme catalyses L-glutamate = D-glutamate. The protein operates within cell wall biogenesis; peptidoglycan biosynthesis. Provides the (R)-glutamate required for cell wall biosynthesis. This is Glutamate racemase from Shouchella clausii (strain KSM-K16) (Alkalihalobacillus clausii).